Here is a 148-residue protein sequence, read N- to C-terminus: Urease accessory protein UreE (148 aa).

The protein belongs to the UreE family.

It is found in the cytoplasm. Functionally, involved in urease metallocenter assembly. Binds nickel. Probably functions as a nickel donor during metallocenter assembly. The polypeptide is Urease accessory protein UreE (Halalkalibacterium halodurans (strain ATCC BAA-125 / DSM 18197 / FERM 7344 / JCM 9153 / C-125) (Bacillus halodurans)).